The following is a 238-amino-acid chain: Pyridoxine 5'-phosphate synthase (238 aa).

Asn-7 lines the 3-amino-2-oxopropyl phosphate pocket. Residue 9 to 10 coordinates 1-deoxy-D-xylulose 5-phosphate; that stretch reads DH. Residue Arg-18 coordinates 3-amino-2-oxopropyl phosphate. His-43 serves as the catalytic Proton acceptor. 1-deoxy-D-xylulose 5-phosphate contacts are provided by Arg-45 and His-50. The active-site Proton acceptor is the Glu-70. Thr-100 is a binding site for 1-deoxy-D-xylulose 5-phosphate. The active-site Proton donor is His-190. 3-amino-2-oxopropyl phosphate contacts are provided by residues Gly-191 and 212–213; that span reads GH.

It belongs to the PNP synthase family. Homooctamer; tetramer of dimers.

The protein localises to the cytoplasm. The catalysed reaction is 3-amino-2-oxopropyl phosphate + 1-deoxy-D-xylulose 5-phosphate = pyridoxine 5'-phosphate + phosphate + 2 H2O + H(+). It participates in cofactor biosynthesis; pyridoxine 5'-phosphate biosynthesis; pyridoxine 5'-phosphate from D-erythrose 4-phosphate: step 5/5. Catalyzes the complicated ring closure reaction between the two acyclic compounds 1-deoxy-D-xylulose-5-phosphate (DXP) and 3-amino-2-oxopropyl phosphate (1-amino-acetone-3-phosphate or AAP) to form pyridoxine 5'-phosphate (PNP) and inorganic phosphate. The sequence is that of Pyridoxine 5'-phosphate synthase from Prochlorococcus marinus (strain MIT 9215).